We begin with the raw amino-acid sequence, 344 residues long: tRNA N6-adenosine threonylcarbamoyltransferase (344 aa).

Fe cation contacts are provided by H113 and H117. Residues 135 to 139 (LVSGG), D169, G182, D186, and N278 contribute to the substrate site. D306 serves as a coordination point for Fe cation. The interval 325 to 344 (ESPISVGTDPSLSVETPQVF) is disordered. Polar residues predominate over residues 326 to 344 (SPISVGTDPSLSVETPQVF).

It belongs to the KAE1 / TsaD family. Requires Fe(2+) as cofactor.

It localises to the cytoplasm. It carries out the reaction L-threonylcarbamoyladenylate + adenosine(37) in tRNA = N(6)-L-threonylcarbamoyladenosine(37) in tRNA + AMP + H(+). In terms of biological role, required for the formation of a threonylcarbamoyl group on adenosine at position 37 (t(6)A37) in tRNAs that read codons beginning with adenine. Is involved in the transfer of the threonylcarbamoyl moiety of threonylcarbamoyl-AMP (TC-AMP) to the N6 group of A37, together with TsaE and TsaB. TsaD likely plays a direct catalytic role in this reaction. This is tRNA N6-adenosine threonylcarbamoyltransferase from Corynebacterium glutamicum (strain R).